We begin with the raw amino-acid sequence, 1141 residues long: Putative late blight resistance protein homolog R1B-13 (1141 aa).

Residues D417–Q437 adopt a coiled-coil conformation. The 227-residue stretch at T516 to L742 folds into the NB-ARC domain. LRR repeat units lie at residues F826–R851, L869–M894, A992–H1016, L1017–G1041, and F1043–I1068.

The protein belongs to the disease resistance NB-LRR family.

It is found in the cytoplasm. The protein localises to the membrane. Its function is as follows. Confers resistance to late blight (Phytophthora infestans) races carrying the avirulence gene Avr1. Resistance proteins guard the plant against pathogens that contain an appropriate avirulence protein via an indirect interaction with this avirulence protein. That triggers a defense system including the hypersensitive response, which restricts the pathogen growth. The protein is Putative late blight resistance protein homolog R1B-13 (R1B-13) of Solanum demissum (Wild potato).